The following is a 644-amino-acid chain: Exoribonuclease 2 (644 aa).

The RNB domain maps to 189 to 516 (REDLTALNFV…NHRLLKAVIT (328 aa)). An S1 motif domain is found at 561 to 643 (DIRFNAEIID…ETRGIVAKPA (83 aa)).

It belongs to the RNR ribonuclease family. RNase II subfamily.

The protein resides in the cytoplasm. It carries out the reaction Exonucleolytic cleavage in the 3'- to 5'-direction to yield nucleoside 5'-phosphates.. Its function is as follows. Involved in mRNA degradation. Hydrolyzes single-stranded polyribonucleotides processively in the 3' to 5' direction. In Pectobacterium atrosepticum (strain SCRI 1043 / ATCC BAA-672) (Erwinia carotovora subsp. atroseptica), this protein is Exoribonuclease 2.